Here is an 861-residue protein sequence, read N- to C-terminus: Probable beta-glucosidase A (861 aa).

An N-terminal signal peptide occupies residues 1 to 19 (MKLSILEAAALTAASVASA). N-linked (GlcNAc...) asparagine glycosylation is found at Asn-62, Asn-212, and Asn-253. Asp-281 is a catalytic residue. N-linked (GlcNAc...) asparagine glycosylation is found at Asn-316, Asn-323, Asn-355, Asn-524, Asn-543, Asn-565, Asn-669, and Asn-713. The segment at 735-754 (PEGATDGSPQPRLPASGGPG) is disordered.

It belongs to the glycosyl hydrolase 3 family.

The protein resides in the secreted. It carries out the reaction Hydrolysis of terminal, non-reducing beta-D-glucosyl residues with release of beta-D-glucose.. It functions in the pathway glycan metabolism; cellulose degradation. Functionally, beta-glucosidases are one of a number of cellulolytic enzymes involved in the degradation of cellulosic biomass. Catalyzes the last step releasing glucose from the inhibitory cellobiose. In Aspergillus terreus, this protein is Probable beta-glucosidase A (bglA).